A 332-amino-acid polypeptide reads, in one-letter code: L-lactate dehydrogenase A chain (332 aa).

N-acetylalanine is present on Ala2. N6-acetyllysine; alternate is present on Lys5. An N6-succinyllysine; alternate modification is found at Lys5. At Lys14 the chain carries N6-acetyllysine. 29–57 is a binding site for NAD(+); it reads GAVGMACAISILMKDLADELALVDVIEDK. An N6-acetyllysine; alternate modification is found at Lys57. Lys57 is covalently cross-linked (Glycyl lysine isopeptide (Lys-Gly) (interchain with G-Cter in SUMO2); alternate). Lys81 is subject to N6-acetyllysine. Arg99 provides a ligand contact to NAD(+). Residue Arg106 coordinates substrate. Lys118 carries the N6-acetyllysine; alternate modification. An N6-succinyllysine; alternate modification is found at Lys118. At Lys126 the chain carries N6-acetyllysine. Position 138 (Asn138) interacts with NAD(+). Substrate-binding residues include Asn138 and Arg169. His193 acts as the Proton acceptor in catalysis. The residue at position 213 (Ser213) is a Phosphoserine. N6-acetyllysine is present on residues Lys224 and Lys232. Position 239 is a phosphotyrosine (Tyr239). Lys243 is subject to N6-acetyllysine. Thr248 contacts substrate. Thr309 is modified (phosphothreonine). Lys318 carries the N6-acetyllysine; alternate modification. Lys318 is subject to N6-succinyllysine; alternate. The residue at position 322 (Thr322) is a Phosphothreonine.

Belongs to the LDH/MDH superfamily. LDH family. In terms of assembly, homotetramer. Interacts with PTEN upstream reading frame protein MP31. Post-translationally, ISGylated.

The protein resides in the cytoplasm. It catalyses the reaction (S)-lactate + NAD(+) = pyruvate + NADH + H(+). The protein operates within fermentation; pyruvate fermentation to lactate; (S)-lactate from pyruvate: step 1/1. Interconverts simultaneously and stereospecifically pyruvate and lactate with concomitant interconversion of NADH and NAD(+). In Rattus norvegicus (Rat), this protein is L-lactate dehydrogenase A chain (Ldha).